The primary structure comprises 485 residues: P2X purinoceptor 2 (485 aa).

Residues 1–43 (MAAAQPRLPAGAAMVRRLARGCWSAFWDYETPKVIVVRNRRLG) lie on the Cytoplasmic side of the membrane. 6 disulfides stabilise this stretch: Cys-22–Cys-443, Cys-126–Cys-177, Cys-137–Cys-160, Cys-143–Cys-171, Cys-227–Cys-237, and Cys-271–Cys-280. The chain crosses the membrane as a helical span at residues 44-64 (FVHRMVQLLILLYFVWYVFIV). At 65–339 (QKSYQDSETG…IVHGQAGKFS (275 aa)) the chain is on the extracellular side. Residues Lys-82 and Lys-84 each coordinate ATP. The N-linked (GlcNAc...) asparagine glycan is linked to Asn-195. Thr-197 serves as a coordination point for ATP. N-linked (GlcNAc...) asparagine glycosylation occurs at Asn-252. ATP contacts are provided by Ser-297, Asn-301, and Arg-303. Asn-311 is a glycosylation site (N-linked (GlcNAc...) asparagine). ATP is bound at residue Lys-321. Positions 322–335 (AYGIRIDVIVHGQA) are pore-forming motif. Residues 340 to 360 (LIPTIINLATALTSIGVGSFL) traverse the membrane as a helical segment. Over 361–485 (CDWILLTFMN…STDPKGLAQL (125 aa)) the chain is Cytoplasmic. Residues 406–485 (PPPSHYSQDQ…STDPKGLAQL (80 aa)) are disordered. The span at 420 to 436 (PSGEGPALGEGAELPLA) shows a compositional bias: low complexity. Positions 469-478 (PSQQDSTSTD) are enriched in polar residues.

It belongs to the P2X receptor family. As to quaternary structure, homotrimer and heterotrimer; functional P2XRs are organized as homomeric and heteromeric trimers. Homotrimer. Forms heterotrimer with P2XR1. Forms heterotrimer with P2XR3. Forms heterotrimer with P2XR6.

It is found in the cell membrane. It carries out the reaction Ca(2+)(in) = Ca(2+)(out). The enzyme catalyses K(+)(in) = K(+)(out). It catalyses the reaction Na(+)(in) = Na(+)(out). With respect to regulation, fast activation by external ATP. Exhibits slow desensitization during prolonged ATP activation. Not sensitive to the ATP agonist:alpha/beta-methylene-ATP. Its function is as follows. ATP-gated nonselective transmembrane cation channel permeable to potassium, sodium and calcium. Activation by extracellular ATP induces a variety of cellular responses, such as excitatory postsynaptic responses in sensory neurons, neuromuscular junctions (NMJ) formation, hearing, perception of taste and peristalsis. In the inner ear, regulates sound transduction and auditory neurotransmission, outer hair cell electromotility, inner ear gap junctions, and K(+) recycling. Mediates synaptic transmission between neurons and from neurons to smooth muscle. The protein is P2X purinoceptor 2 (P2rx2) of Mus musculus (Mouse).